The following is a 390-amino-acid chain: Protein arginine N-methyltransferase 1.1 (390 aa).

Residues Met-1–Asn-10 are compositionally biased toward basic and acidic residues. The disordered stretch occupies residues Met-1–Thr-59. Residues Ala-69 to Arg-390 enclose the SAM-dependent MTase PRMT-type domain. Active-site residues include Glu-181 and Glu-190.

Belongs to the class I-like SAM-binding methyltransferase superfamily. Protein arginine N-methyltransferase family. Interacts with PRMT12, MBD7 and FIB2.

It localises to the nucleus. The protein localises to the cytoplasm. The catalysed reaction is L-arginyl-[protein] + 2 S-adenosyl-L-methionine = N(omega),N(omega)-dimethyl-L-arginyl-[protein] + 2 S-adenosyl-L-homocysteine + 2 H(+). Methylates (mono and asymmetric dimethylation) the guanidino nitrogens of arginyl residues present in a glycine and arginine-rich domain. Type I arginine methyltransferase active on both histones and non-histone proteins. Required for leaves and flowers development. Mediates the methylation of MBD7 and MED36A. The chain is Protein arginine N-methyltransferase 1.1 (PRMT11) from Arabidopsis thaliana (Mouse-ear cress).